Here is a 916-residue protein sequence, read N- to C-terminus: Protein translocase subunit SecA (916 aa).

Residues Gln87, 105–109 (GEGKT), and Asp507 contribute to the ATP site. Zn(2+) contacts are provided by Cys900, Cys902, Cys911, and His912.

The protein belongs to the SecA family. In terms of assembly, monomer and homodimer. Part of the essential Sec protein translocation apparatus which comprises SecA, SecYEG and auxiliary proteins SecDF-YajC and YidC. Zn(2+) is required as a cofactor.

Its subcellular location is the cell inner membrane. It is found in the cytoplasm. It catalyses the reaction ATP + H2O + cellular proteinSide 1 = ADP + phosphate + cellular proteinSide 2.. In terms of biological role, part of the Sec protein translocase complex. Interacts with the SecYEG preprotein conducting channel. Has a central role in coupling the hydrolysis of ATP to the transfer of proteins into and across the cell membrane, serving both as a receptor for the preprotein-SecB complex and as an ATP-driven molecular motor driving the stepwise translocation of polypeptide chains across the membrane. The sequence is that of Protein translocase subunit SecA from Neisseria gonorrhoeae (strain NCCP11945).